A 299-amino-acid chain; its full sequence is Acetylglutamate kinase (299 aa).

Substrate contacts are provided by residues 70–71, R92, and N197; that span reads GG.

The protein belongs to the acetylglutamate kinase family. ArgB subfamily.

Its subcellular location is the cytoplasm. It catalyses the reaction N-acetyl-L-glutamate + ATP = N-acetyl-L-glutamyl 5-phosphate + ADP. Its pathway is amino-acid biosynthesis; L-arginine biosynthesis; N(2)-acetyl-L-ornithine from L-glutamate: step 2/4. Catalyzes the ATP-dependent phosphorylation of N-acetyl-L-glutamate. The sequence is that of Acetylglutamate kinase from Acidiphilium cryptum (strain JF-5).